The primary structure comprises 60 residues: Metallothionein A (60 aa).

The beta stretch occupies residues 1-28 (MDPCECSKSGNCNCGGSCTCTNCSCKSC). Residues C4, C6, C12, C14, C18, C20, C23, C25, C28, C32, C33, C35, C36, C40, C43, C47, C49, C54, C58, and C59 each contribute to the a divalent metal cation site. The alpha stretch occupies residues 29–60 (KKSCCPCCPSGCTKCASGCVCKGKTCDTSCCQ).

This sequence belongs to the metallothionein superfamily. Type 1 family.

In terms of biological role, metallothioneins have a high content of cysteine residues that bind various heavy metals. The sequence is that of Metallothionein A (mta) from Parachaenichthys charcoti (Charcot's dragonfish).